Reading from the N-terminus, the 386-residue chain is Small ribosomal subunit protein mS31 (386 aa).

The protein belongs to the mitochondrion-specific ribosomal protein mS31 family. In terms of assembly, component of the mitochondrial ribosome small subunit (28S) which comprises a 12S rRNA and about 30 distinct proteins.

The protein resides in the mitochondrion. In Bos taurus (Bovine), this protein is Small ribosomal subunit protein mS31 (MRPS31).